Here is a 202-residue protein sequence, read N- to C-terminus: Large ribosomal subunit protein bL9 (202 aa).

The disordered stretch occupies residues 168 to 202; it reads DEAGFTEDYDPNAEPGEIPTELQDEAPAAEATDEA. The span at 192–202 shows a compositional bias: low complexity; it reads EAPAAEATDEA.

It belongs to the bacterial ribosomal protein bL9 family.

In terms of biological role, binds to the 23S rRNA. The sequence is that of Large ribosomal subunit protein bL9 from Rhizorhabdus wittichii (strain DSM 6014 / CCUG 31198 / JCM 15750 / NBRC 105917 / EY 4224 / RW1) (Sphingomonas wittichii).